Here is a 315-residue protein sequence, read N- to C-terminus: Peroxidase 1 (315 aa).

A signal peptide spans 1 to 21 (MASSSYTSLLVLVALVTAASA). Pyrrolidone carboxylic acid is present on glutamine 22. 4 disulfide bridges follow: cysteine 32–cysteine 107, cysteine 65–cysteine 70, cysteine 113–cysteine 310, and cysteine 193–cysteine 219. Histidine 63 serves as the catalytic Proton acceptor. Residues aspartate 64, valine 67, glycine 69, aspartate 71, and serine 73 each contribute to the Ca(2+) site. Residue proline 155 participates in substrate binding. The N-linked (GlcNAc...) asparagine glycan is linked to asparagine 158. Histidine 186 is a binding site for heme b. Threonine 187 serves as a coordination point for Ca(2+). Ca(2+) contacts are provided by aspartate 234, threonine 237, and aspartate 242. N-linked (GlcNAc...) asparagine glycosylation occurs at asparagine 265.

The protein belongs to the peroxidase family. Classical plant (class III) peroxidase subfamily. Ca(2+) serves as cofactor. Requires heme b as cofactor.

It localises to the secreted. The enzyme catalyses 2 a phenolic donor + H2O2 = 2 a phenolic radical donor + 2 H2O. In terms of biological role, removal of H(2)O(2), oxidation of toxic reductants, biosynthesis and degradation of lignin, suberization, auxin catabolism, response to environmental stresses such as wounding, pathogen attack and oxidative stress. These functions might be dependent on each isozyme/isoform in each plant tissue. Involved in defense response to powdery meldew fungus. This chain is Peroxidase 1, found in Hordeum vulgare (Barley).